The sequence spans 131 residues: Profilin LP04 (131 aa).

It belongs to the profilin family. In terms of assembly, occurs in many kinds of cells as a complex with monomeric actin in a 1:1 ratio.

The protein localises to the cytoplasm. It localises to the cytoskeleton. Binds to actin and affects the structure of the cytoskeleton. At high concentrations, profilin prevents the polymerization of actin, whereas it enhances it at low concentrations. By binding to PIP2, it inhibits the formation of IP3 and DG. The protein is Profilin LP04 of Oryza sativa subsp. indica (Rice).